A 401-amino-acid polypeptide reads, in one-letter code: Rho-N domain-containing protein 1, chloroplastic (401 aa).

Residues 1-63 (MAMSGTFHLT…VPNRSSFVCR (63 aa)) constitute a chloroplast transit peptide. Disordered stretches follow at residues 73–129 (PDFS…PGPR) and 180–361 (KHSG…EEAV). Composition is skewed to polar residues over residues 102–126 (DMLSSRNGPLFNLSSSPKFQATSSP), 210–223 (TGNLVTSGNKDNNA), and 240–265 (PRSQSPPAYSSEATFDQSSSYSVTWT). The span at 266 to 290 (QKKDTVELHDEPEHEPAYEHEHEPE) shows a compositional bias: basic and acidic residues. A compositionally biased stretch (acidic residues) spans 339 to 358 (LSDDDESLDDADEDSDEAEE). The stretch at 339–371 (LSDDDESLDDADEDSDEAEEEAVKDLSELKLVE) forms a coiled coil.

In terms of assembly, homodimer or homomultimer. Part of a chloroplastic degradosome-like complex. Interacts with RNE.

Its subcellular location is the plastid. It localises to the chloroplast. In terms of biological role, binds to and supports processing of specific plastid RNAs. Associates via its C-terminal Rho-N domain to single stranded regions of 16S and 23S rRNAs or to rbcL mRNAs. May be involved in targeting transcripts to RNases such as RNE or RNase J. The polypeptide is Rho-N domain-containing protein 1, chloroplastic (RHON1) (Arabidopsis thaliana (Mouse-ear cress)).